We begin with the raw amino-acid sequence, 302 residues long: Ribosomal RNA small subunit methyltransferase H (302 aa).

S-adenosyl-L-methionine-binding positions include 36-38 (GGH), Asp56, Phe84, Asp99, and Gln106.

The protein belongs to the methyltransferase superfamily. RsmH family.

The protein resides in the cytoplasm. It catalyses the reaction cytidine(1402) in 16S rRNA + S-adenosyl-L-methionine = N(4)-methylcytidine(1402) in 16S rRNA + S-adenosyl-L-homocysteine + H(+). Functionally, specifically methylates the N4 position of cytidine in position 1402 (C1402) of 16S rRNA. The sequence is that of Ribosomal RNA small subunit methyltransferase H from Flavobacterium johnsoniae (strain ATCC 17061 / DSM 2064 / JCM 8514 / BCRC 14874 / CCUG 350202 / NBRC 14942 / NCIMB 11054 / UW101) (Cytophaga johnsonae).